A 315-amino-acid chain; its full sequence is Acetyl-coenzyme A carboxylase carboxyl transferase subunit alpha (315 aa).

Residues 35–289 (KLSKKRFELM…RKAVAAELKI (255 aa)) form the CoA carboxyltransferase C-terminal domain.

It belongs to the AccA family. As to quaternary structure, acetyl-CoA carboxylase is a heterohexamer composed of biotin carboxyl carrier protein (AccB), biotin carboxylase (AccC) and two subunits each of ACCase subunit alpha (AccA) and ACCase subunit beta (AccD).

It is found in the cytoplasm. The catalysed reaction is N(6)-carboxybiotinyl-L-lysyl-[protein] + acetyl-CoA = N(6)-biotinyl-L-lysyl-[protein] + malonyl-CoA. It functions in the pathway lipid metabolism; malonyl-CoA biosynthesis; malonyl-CoA from acetyl-CoA: step 1/1. In terms of biological role, component of the acetyl coenzyme A carboxylase (ACC) complex. First, biotin carboxylase catalyzes the carboxylation of biotin on its carrier protein (BCCP) and then the CO(2) group is transferred by the carboxyltransferase to acetyl-CoA to form malonyl-CoA. The protein is Acetyl-coenzyme A carboxylase carboxyl transferase subunit alpha of Francisella tularensis subsp. mediasiatica (strain FSC147).